A 427-amino-acid chain; its full sequence is Peptidase B (427 aa).

Residues K195 and D200 each coordinate Mn(2+). K207 is a catalytic residue. 3 residues coordinate Mn(2+): D218, D277, and E279. R281 is a catalytic residue.

This sequence belongs to the peptidase M17 family. Homohexamer. The cofactor is Mn(2+).

Its subcellular location is the cytoplasm. It carries out the reaction Release of an N-terminal amino acid, Xaa, from a peptide or arylamide. Xaa is preferably Glu or Asp but may be other amino acids, including Leu, Met, His, Cys and Gln.. Its function is as follows. Probably plays an important role in intracellular peptide degradation. The chain is Peptidase B from Citrobacter koseri (strain ATCC BAA-895 / CDC 4225-83 / SGSC4696).